A 132-amino-acid polypeptide reads, in one-letter code: Group 2 truncated hemoglobin YjbI (132 aa).

Heme-binding residues include threonine 45, lysine 48, tyrosine 63, and histidine 76.

Belongs to the truncated hemoglobin family. Group II subfamily. Monomer. Heme serves as cofactor.

Functionally, hemoglobin-like protein that exhibits a low peroxidase activity. Its very high oxygen affinity may rule out the possibility that it is involved in oxygen transport. The protein is Group 2 truncated hemoglobin YjbI (yjbI) of Bacillus subtilis (strain 168).